Reading from the N-terminus, the 330-residue chain is Protein-lysine N-methyltransferase EEF2KMT (330 aa).

Met1 is modified (N-acetylmethionine). S-adenosyl-L-methionine is bound by residues Trp139, 165-167 (GSG), Trp228, and Ala247.

The protein belongs to the class I-like SAM-binding methyltransferase superfamily. EEF2KMT family. In terms of assembly, interacts with FAM86B2 and FAM86C1P.

Its subcellular location is the cytoplasm. It catalyses the reaction L-lysyl-[protein] + 3 S-adenosyl-L-methionine = N(6),N(6),N(6)-trimethyl-L-lysyl-[protein] + 3 S-adenosyl-L-homocysteine + 3 H(+). In terms of biological role, catalyzes the trimethylation of eukaryotic elongation factor 2 (EEF2) on 'Lys-525'. The protein is Protein-lysine N-methyltransferase EEF2KMT of Homo sapiens (Human).